The chain runs to 261 residues: [LysW]-aminoadipate/[LysW]-glutamate kinase (261 aa).

Substrate-binding positions include 35–36 (GG), Arg62, and Asn166.

The protein belongs to the acetylglutamate kinase family. LysZ subfamily.

It localises to the cytoplasm. The enzyme catalyses [amino-group carrier protein]-C-terminal-N-(1,4-dicarboxybutan-1-yl)-L-glutamine + ATP = [amino-group carrier protein]-C-terminal-N-(1-carboxy-5-phosphooxy-5-oxopentan-1-yl)-L-glutamine + ADP. It carries out the reaction [amino-group carrier protein]-C-terminal-gamma-(L-glutamyl)-L-glutamate + ATP = [amino-group carrier protein]-C-terminal-gamma-(5-phospho-L-glutamyl)-L-glutamate + ADP. It participates in amino-acid biosynthesis; L-lysine biosynthesis via AAA pathway; L-lysine from L-alpha-aminoadipate (Thermus route): step 2/5. The protein operates within amino-acid biosynthesis; L-arginine biosynthesis. In terms of biological role, involved in both the arginine and lysine biosynthetic pathways. Phosphorylates the LysW-bound precursors glutamate (for arginine biosynthesis), respectively alpha-aminoadipate (for lysine biosynthesis). This chain is [LysW]-aminoadipate/[LysW]-glutamate kinase, found in Sulfolobus acidocaldarius (strain ATCC 33909 / DSM 639 / JCM 8929 / NBRC 15157 / NCIMB 11770).